Consider the following 162-residue polypeptide: UPF0114 protein PA4574 (162 aa).

A run of 3 helical transmembrane segments spans residues tyrosine 10–isoleucine 32, leucine 53–isoleucine 75, and leucine 136–leucine 156.

Belongs to the UPF0114 family.

The protein resides in the cell membrane. The polypeptide is UPF0114 protein PA4574 (Pseudomonas aeruginosa (strain ATCC 15692 / DSM 22644 / CIP 104116 / JCM 14847 / LMG 12228 / 1C / PRS 101 / PAO1)).